A 129-amino-acid chain; its full sequence is NHP2-like protein 1 homolog (129 aa).

It belongs to the eukaryotic ribosomal protein eL8 family.

It is found in the nucleus. Its subcellular location is the nucleolus. Functionally, binds to the 5'-stem-loop of U4 snRNA and may play a role in the late stage of spliceosome assembly. The protein undergoes a conformational change upon RNA-binding. This Dictyostelium discoideum (Social amoeba) protein is NHP2-like protein 1 homolog.